Reading from the N-terminus, the 453-residue chain is Bifunctional protein GlmU (453 aa).

The tract at residues M1–R226 is pyrophosphorylase. UDP-N-acetyl-alpha-D-glucosamine-binding positions include L7–G10, K21, Q73, and G78–T79. Position 103 (D103) interacts with Mg(2+). Positions 140, 155, 170, and 224 each coordinate UDP-N-acetyl-alpha-D-glucosamine. Residue N224 participates in Mg(2+) binding. The segment at K227–Q247 is linker. Residues G248 to K453 are N-acetyltransferase. UDP-N-acetyl-alpha-D-glucosamine-binding residues include R329 and K347. Residue H359 is the Proton acceptor of the active site. Positions 362 and 373 each coordinate UDP-N-acetyl-alpha-D-glucosamine. Acetyl-CoA is bound by residues A376, N382–Y383, A419, and R436.

In the N-terminal section; belongs to the N-acetylglucosamine-1-phosphate uridyltransferase family. It in the C-terminal section; belongs to the transferase hexapeptide repeat family. In terms of assembly, homotrimer. Mg(2+) is required as a cofactor.

Its subcellular location is the cytoplasm. It catalyses the reaction alpha-D-glucosamine 1-phosphate + acetyl-CoA = N-acetyl-alpha-D-glucosamine 1-phosphate + CoA + H(+). It carries out the reaction N-acetyl-alpha-D-glucosamine 1-phosphate + UTP + H(+) = UDP-N-acetyl-alpha-D-glucosamine + diphosphate. It functions in the pathway nucleotide-sugar biosynthesis; UDP-N-acetyl-alpha-D-glucosamine biosynthesis; N-acetyl-alpha-D-glucosamine 1-phosphate from alpha-D-glucosamine 6-phosphate (route II): step 2/2. It participates in nucleotide-sugar biosynthesis; UDP-N-acetyl-alpha-D-glucosamine biosynthesis; UDP-N-acetyl-alpha-D-glucosamine from N-acetyl-alpha-D-glucosamine 1-phosphate: step 1/1. Its pathway is bacterial outer membrane biogenesis; LPS lipid A biosynthesis. Functionally, catalyzes the last two sequential reactions in the de novo biosynthetic pathway for UDP-N-acetylglucosamine (UDP-GlcNAc). The C-terminal domain catalyzes the transfer of acetyl group from acetyl coenzyme A to glucosamine-1-phosphate (GlcN-1-P) to produce N-acetylglucosamine-1-phosphate (GlcNAc-1-P), which is converted into UDP-GlcNAc by the transfer of uridine 5-monophosphate (from uridine 5-triphosphate), a reaction catalyzed by the N-terminal domain. The sequence is that of Bifunctional protein GlmU from Rippkaea orientalis (strain PCC 8801 / RF-1) (Cyanothece sp. (strain PCC 8801)).